A 412-amino-acid chain; its full sequence is Multifunctional CCA protein (412 aa).

Positions 8 and 11 each coordinate ATP. Residues Gly-8 and Arg-11 each contribute to the CTP site. 2 residues coordinate Mg(2+): Glu-21 and Asp-23. The ATP site is built by Arg-91, Arg-137, and Arg-140. CTP contacts are provided by Arg-91, Arg-137, and Arg-140. The 102-residue stretch at 228-329 (TGIHTLMTLA…LKLFNAIDVW (102 aa)) folds into the HD domain.

The protein belongs to the tRNA nucleotidyltransferase/poly(A) polymerase family. Bacterial CCA-adding enzyme type 1 subfamily. In terms of assembly, monomer. Can also form homodimers and oligomers. Requires Mg(2+) as cofactor. Ni(2+) is required as a cofactor.

It carries out the reaction a tRNA precursor + 2 CTP + ATP = a tRNA with a 3' CCA end + 3 diphosphate. It catalyses the reaction a tRNA with a 3' CCA end + 2 CTP + ATP = a tRNA with a 3' CCACCA end + 3 diphosphate. Functionally, catalyzes the addition and repair of the essential 3'-terminal CCA sequence in tRNAs without using a nucleic acid template. Adds these three nucleotides in the order of C, C, and A to the tRNA nucleotide-73, using CTP and ATP as substrates and producing inorganic pyrophosphate. tRNA 3'-terminal CCA addition is required both for tRNA processing and repair. Also involved in tRNA surveillance by mediating tandem CCA addition to generate a CCACCA at the 3' terminus of unstable tRNAs. While stable tRNAs receive only 3'-terminal CCA, unstable tRNAs are marked with CCACCA and rapidly degraded. This Yersinia pestis protein is Multifunctional CCA protein.